The chain runs to 254 residues: MVIANSNIIFVAGLGGIGLDTSREIVKSGPKNLVLLDRIDNPAAIAELKALNPKVTVTFYPYDVTVPLAETKKLLKTIFDKLKTVDLLINGAGILDDNQIERTIAVNFTGLVNTTTAILDFWDKRKGGPVGVVANICSVTGFNSIYQVPVYSASKAAALSFTTSIAKLAHITGVTAYSINPGITKTVLEHSFNSWLNVEPRVAELLLEHPTQTTLQCAQNFVKAIEANQNGAIWKLDLGRLDAIEWTKRWDSGI.

10-33 provides a ligand contact to NAD(+); it reads FVAGLGGIGLDTSREIVKSGPKNL. Ser138 provides a ligand contact to substrate. The active-site Proton acceptor is Tyr151.

Belongs to the short-chain dehydrogenases/reductases (SDR) family. As to quaternary structure, homodimer.

It carries out the reaction a primary alcohol + NAD(+) = an aldehyde + NADH + H(+). The catalysed reaction is a secondary alcohol + NAD(+) = a ketone + NADH + H(+). This Drosophila hawaiiensis (Fruit fly) protein is Alcohol dehydrogenase (Adh).